Reading from the N-terminus, the 245-residue chain is Octopine transport system permease protein OccM (245 aa).

5 consecutive transmembrane segments (helical) span residues 12-32, 57-77, 96-116, 163-183, and 204-224; these read FVALLSGIPLALQLAVFSVAL, FYIFAFRGTPLLVQIYIIYYG, AYWCAMAALALNTAAYTAEIM, ILMVKSTSLASTITIMEITGI, and IYLILNFIVARLFTLLEWALW. An ABC transmembrane type-1 domain is found at 19-216; the sequence is IPLALQLAVF…ILNFIVARLF (198 aa).

Belongs to the binding-protein-dependent transport system permease family. HisMQ subfamily.

The protein resides in the cell inner membrane. In terms of biological role, component of the octopine active transport system probably consisting of four subunits: Q, M, P and T. The protein is Octopine transport system permease protein OccM (occM) of Rhizobium radiobacter (Agrobacterium tumefaciens).